The following is a 319-amino-acid chain: Ferrochelatase (319 aa).

His193 and Glu274 together coordinate Fe cation.

The protein belongs to the ferrochelatase family.

Its subcellular location is the cytoplasm. The enzyme catalyses heme b + 2 H(+) = protoporphyrin IX + Fe(2+). It participates in porphyrin-containing compound metabolism; protoheme biosynthesis; protoheme from protoporphyrin-IX: step 1/1. Its function is as follows. Catalyzes the ferrous insertion into protoporphyrin IX. In Actinobacillus pleuropneumoniae serotype 5b (strain L20), this protein is Ferrochelatase.